A 1062-amino-acid polypeptide reads, in one-letter code: Integrin alpha-8 (1062 aa).

The N-terminal stretch at 1-35 (MSAGTHCGPPGNRAPPFARLCCVSAALGMLWSPAC) is a signal peptide. Topologically, residues 36–1010 (LAFNLDVDKL…ATPNVSFSIP (975 aa)) are extracellular. FG-GAP repeat units follow at residues 41–104 (DVDK…RSAQ), 121–182 (NGTK…AYAE), 187–239 (RNSN…IANY), 252–305 (KQTD…STDM), 306–371 (TFIQ…LLFQ), 372–430 (DPQV…GLHS), and 434–497 (QVLQ…LHPM). Residue asparagine 80 is glycosylated (N-linked (GlcNAc...) asparagine). Cysteine 95 and cysteine 105 are disulfide-bonded. A glycan (N-linked (GlcNAc...) asparagine) is linked at asparagine 121. The cysteines at positions 149 and 170 are disulfide-linked. Residue asparagine 176 is glycosylated (N-linked (GlcNAc...) asparagine). Residues cysteine 186 and cysteine 199 are joined by a disulfide bond. Asparagine 238 carries an N-linked (GlcNAc...) asparagine glycan. Ca(2+) contacts are provided by glutamate 274, threonine 276, aspartate 278, and glutamate 282. 2 N-linked (GlcNAc...) asparagine glycosylation sites follow: asparagine 301 and asparagine 310. Aspartate 328, asparagine 330, aspartate 332, aspartate 336, aspartate 394, asparagine 396, aspartate 398, tyrosine 400, and aspartate 402 together coordinate Ca(2+). Residues 454–456 (RGD) carry the Cell attachment site motif. Ca(2+) contacts are provided by aspartate 458, aspartate 460, asparagine 462, tyrosine 464, and aspartate 466. Asparagine 503 is a glycosylation site (N-linked (GlcNAc...) asparagine). Intrachain disulfides connect cysteine 506/cysteine 517 and cysteine 523/cysteine 579. N-linked (GlcNAc...) asparagine glycosylation is found at asparagine 600 and asparagine 604. 2 disulfide bridges follow: cysteine 640–cysteine 646 and cysteine 712–cysteine 725. N-linked (GlcNAc...) asparagine glycosylation is found at asparagine 718, asparagine 736, asparagine 752, asparagine 779, asparagine 895, and asparagine 922. 2 disulfides stabilise this stretch: cysteine 866–cysteine 923 and cysteine 928–cysteine 933. The N-linked (GlcNAc...) asparagine glycan is linked to asparagine 1004. A helical membrane pass occupies residues 1011 to 1031 (LWVIILAILLGLLVLAILTLA). At 1032 to 1062 (LWKCGFFDRARPPQDEMTDREQLTSDKTPEA) the chain is on the cytoplasmic side.

The protein belongs to the integrin alpha chain family. In terms of assembly, heterodimer of an alpha and a beta subunit. The alpha subunit is composed of a heavy and a light chain linked by a disulfide bond. Alpha-8 associates with beta-1. In brain, expressed in deep cortex, hippocampal CA1, basolateral amygdala and striatum. In kidney, expressed in glomerular mesengium (at protein level).

The protein resides in the membrane. It localises to the cell membrane. Its function is as follows. Integrin alpha-8/beta-1 functions in the genesis of kidney and probably of other organs by regulating the recruitment of mesenchymal cells into epithelial structures. It recognizes the sequence R-G-D in a wide array of ligands including TNC, FN1, SPP1 TGFB1, TGFB3 and VTN. NPNT is probably its functional ligand in kidney genesis. Neuronal receptor for TNC it mediates cell-cell interactions and regulates neurite outgrowth of sensory and motor neurons. This Mus musculus (Mouse) protein is Integrin alpha-8 (Itga8).